The sequence spans 1338 residues: P-type sodium-transporting ATPase4 (1338 aa).

The tract at residues 1-106 is disordered; that stretch reads MAARASADKL…KSISSVSQMH (106 aa). The span at 55 to 69 shows a compositional bias: basic and acidic residues; the sequence is AEEKVAGHDGESPRR. A compositionally biased stretch (polar residues) spans 91–104; sequence GHSQLGKSISSVSQ. Helical transmembrane passes span 229–249, 255–275, 418–438, 456–476, 985–1005, 1068–1088, 1261–1281, and 1288–1308; these read IFIQ…AIAS, WVEG…ATYM, LGGM…VVAI, IVLV…PMVV, FVCF…IAIA, IFEA…CTGV, MHLA…VPGI, and CALP…NLIL.

The protein belongs to the cation transport ATPase (P-type) (TC 3.A.3) family.

The protein localises to the cell membrane. The enzyme catalyses Na(+)(in) + ATP + H2O = Na(+)(out) + ADP + phosphate + H(+). With respect to regulation, inhibited by cipargamin, a synthetic spiroindolone. Inhibited by pyrazoleamide PA21A050, structurally unrelated to the spiroindolones. Inhibited by (+)-SJ733, a dihydroisoquinolone compound. In terms of biological role, sodium-exporting ATPase. Required for the extrusion of Na(+) from the parasites to maintain a low cytosolic concentration of Na(+). Required for maintaining the viability of extracellular parasites but not for intracellular growth, egress or invasion. Involved in parasite virulence. The polypeptide is P-type sodium-transporting ATPase4 (Toxoplasma gondii (strain ATCC 50861 / VEG)).